The primary structure comprises 105 residues: Nucleoid-associated protein Lm4b_02677 (105 aa).

A compositionally biased stretch (low complexity) spans 1–16; sequence MRGMGNMQGMMKQMQK. Positions 1–23 are disordered; it reads MRGMGNMQGMMKQMQKMQKEMAK.

It belongs to the YbaB/EbfC family. In terms of assembly, homodimer.

Its subcellular location is the cytoplasm. The protein localises to the nucleoid. Its function is as follows. Binds to DNA and alters its conformation. May be involved in regulation of gene expression, nucleoid organization and DNA protection. The chain is Nucleoid-associated protein Lm4b_02677 from Listeria monocytogenes serotype 4b (strain CLIP80459).